Consider the following 443-residue polypeptide: DNA double-strand break repair protein Mre11 (443 aa).

Mn(2+)-binding residues include Asp-8, His-10, Asp-49, and Asn-84. The active-site Proton donor is the His-85. Mn(2+)-binding residues include His-169, His-201, and His-203. Residues Gln-382–Arg-429 are disordered. The segment covering Thr-395–Lys-423 has biased composition (basic and acidic residues).

The protein belongs to the MRE11/RAD32 family. In terms of assembly, homodimer. Forms a heterotetramer composed of two Mre11 subunits and two Rad50 subunits. Mn(2+) is required as a cofactor.

With respect to regulation, nuclease activity is regulated by Rad50. Functionally, part of the Rad50/Mre11 complex, which is involved in the early steps of DNA double-strand break (DSB) repair. The complex may facilitate opening of the processed DNA ends to aid in the recruitment of HerA and NurA. Mre11 binds to DSB ends and has both double-stranded 3'-5' exonuclease activity and single-stranded endonuclease activity. This chain is DNA double-strand break repair protein Mre11, found in Archaeoglobus fulgidus (strain ATCC 49558 / DSM 4304 / JCM 9628 / NBRC 100126 / VC-16).